Reading from the N-terminus, the 966-residue chain is Serine/threonine-protein kinase 10 (966 aa).

A phosphoserine mark is found at Ser13 and Ser20. In terms of domain architecture, Protein kinase spans 36-294 (WEIVGELGDG…AAQLLQHPFV (259 aa)). ATP contacts are provided by residues 42-50 (LGDGAFGKV) and Lys65. The active-site Proton acceptor is Asp157. Residues 175–224 (DFGVSAKNLKTLQKRDSFIGTPYWMAPEVVLCETMKDAPYDYKADIWSLG) are activation segment. Residue Thr185 is modified to Phosphothreonine; by autocatalysis. At Ser191 the chain carries Phosphoserine. Polar residues-rich tracts occupy residues 341–363 (TQDSANVTQPSLDSNKLLQDSST) and 371–392 (QEPVSGSCSQPSGDGPLQTTSP). Residues 341–497 (TQDSANVTQP…NLSTSESMDY (157 aa)) are disordered. A compositionally biased stretch (basic and acidic residues) spans 421 to 430 (IQMDEEKQIP). Ser437, Ser449, Ser453, and Ser484 each carry phosphoserine. Polar residues predominate over residues 438 to 456 (PAASKSQKANQSRPNSSAL). The span at 485–497 (DCSNLSTSESMDY) shows a compositional bias: polar residues. Ser513 and Ser548 each carry phosphoserine. Residues 588–936 (LQLEQMHKRF…LNQKKREQEM (349 aa)) adopt a coiled-coil conformation. 3 disordered regions span residues 660–692 (KKEVKSEVEKLPRQQRKESMKQKMEEHSQKKQR), 826–865 (INGAGSASEQREKIKQFSQQEEKRQKAERLQQQQKHENQM), and 901–966 (LDES…GDAS). Basic and acidic residues-rich tracts occupy residues 834 to 865 (EQREKIKQFSQQEEKRQKAERLQQQQKHENQM) and 901 to 946 (LDES…EAEP). Residue Thr950 is modified to Phosphothreonine. The span at 950-966 (TPSKASNFFPYSSGDAS) shows a compositional bias: polar residues.

It belongs to the protein kinase superfamily. STE Ser/Thr protein kinase family. STE20 subfamily. In terms of assembly, homodimer; homodimerization is required for activation segment autophosphorylation. Autophosphorylates following homodimerization, leading to activation of the protein. Expressed predominantly in lymphoid organs such as spleen, thymus, and bone marrow.

It is found in the cell membrane. The enzyme catalyses L-seryl-[protein] + ATP = O-phospho-L-seryl-[protein] + ADP + H(+). It carries out the reaction L-threonyl-[protein] + ATP = O-phospho-L-threonyl-[protein] + ADP + H(+). With respect to regulation, inhibited by the pyrrole-indolinone inhibitor SU11274 (K00593): intercalates between the ATP-binding Lys-65 and alpha-C glutamate (Glu-81), resulting in a partial disordering of the lysine side chain. Also specifically inhibited by erlotinib. Slightly inhibited by gefitinib. Functionally, serine/threonine-protein kinase involved in regulation of lymphocyte migration. Phosphorylates MSN, and possibly PLK1. Involved in regulation of lymphocyte migration by mediating phosphorylation of ERM proteins such as MSN. Acts as a negative regulator of MAP3K1/MEKK1. May also act as a cell cycle regulator by acting as a polo kinase kinase: mediates phosphorylation of PLK1 in vitro; however such data require additional evidences in vivo. The chain is Serine/threonine-protein kinase 10 (Stk10) from Mus musculus (Mouse).